We begin with the raw amino-acid sequence, 154 residues long: MATFSQKPAEVEKKWVIIDAEGLVVGRLASIIAMRLRGKHKATFTPHVDDGDNVIVINADKVVFTGKKYSDKVYYWHTGYAGGIKERTARQIIEGRFPERVLEKAVERMVPRGPLGRRQMKNLRVYAGPNHPHEAQQPVALDVAALNKKNVRSA.

The protein belongs to the universal ribosomal protein uL13 family. In terms of assembly, part of the 50S ribosomal subunit.

Its function is as follows. This protein is one of the early assembly proteins of the 50S ribosomal subunit, although it is not seen to bind rRNA by itself. It is important during the early stages of 50S assembly. The chain is Large ribosomal subunit protein uL13 from Rhizobium etli (strain ATCC 51251 / DSM 11541 / JCM 21823 / NBRC 15573 / CFN 42).